The following is a 385-amino-acid chain: Glycine/sarcosine/betaine reductase complex component C subunit alpha (385 aa).

Residue cysteine 359 is part of the active site.

In terms of assembly, heterooctamer of four alpha and four beta subunits. Component of the glycine, sarcosine and betaine reductase complexes, together with proteins A and B.

The enzyme catalyses acetyl phosphate + [thioredoxin]-disulfide + NH4(+) + H2O = [thioredoxin]-dithiol + glycine + phosphate + H(+). The catalysed reaction is acetyl phosphate + methylamine + [thioredoxin]-disulfide + H2O = sarcosine + [thioredoxin]-dithiol + phosphate + H(+). It catalyses the reaction acetyl phosphate + trimethylamine + [thioredoxin]-disulfide + H2O = glycine betaine + [thioredoxin]-dithiol + phosphate + H(+). Functionally, in the first step of glycine, betaine and sarcosine reductases, the substrate is bound to component PB via a Schiff base intermediate. Then the PB-activated substrate is nucleophilically attacked by the selenol anion of component PA to transform it to a carboxymethylated selenoether and the respective amine. By action of component PC, acetyl phosphate is formed, leaving component PA in its oxidized state. Finally component PA becomes reduced by the thioredoxin system to start a new catalytic cycle of reductive deamination. In Peptoclostridium acidaminophilum (Eubacterium acidaminophilum), this protein is Glycine/sarcosine/betaine reductase complex component C subunit alpha (grdD).